Reading from the N-terminus, the 1052-residue chain is Protein argonaute 14 (1052 aa).

Residues 1 to 39 (MASRGGDGLVGGGRGPLGGRDGRGRGPAGGRGGGRGGGH) are compositionally biased toward gly residues. 2 disordered regions span residues 1 to 127 (MASR…TPAV) and 170 to 194 (GGRP…APPS). Low complexity predominate over residues 40–49 (PQQQQQQQPG). Gly residues-rich tracts occupy residues 50-59 (YGRGDGGGRG) and 66-81 (GVVG…GGRG). Low complexity predominate over residues 97–117 (VRPAMAAAPAASTPGPVAVAA). Over residues 173–183 (PAPPAAPPAPI) the composition is skewed to pro residues. The region spanning 394-510 (SVVEYVKNCL…LPMEVCTIVE (117 aa)) is the PAZ domain. A Piwi domain is found at 677–1009 (LLIVILPDVN…AAFRARYYDE (333 aa)).

It belongs to the argonaute family. Ago subfamily. In terms of tissue distribution, expressed in seeds.

Functionally, probably involved in the RNA silencing pathway. May bind to short RNAs such as microRNAs (miRNAs) or short interfering RNAs (siRNAs), and represses the translation of mRNAs which are complementary to them. This is Protein argonaute 14 (AGO14) from Oryza sativa subsp. japonica (Rice).